Reading from the N-terminus, the 689-residue chain is Collagen alpha-2(IX) chain (689 aa).

Positions 1–23 (MAAATASPRSLLVLLQVVVLALA) are cleaved as a signal peptide. Residues 26–518 (RGPPGERGPP…QPGRQGVEGR (493 aa)) are disordered. Residues 27 to 163 (GPPGERGPPG…PGKPGRPGTI (137 aa)) are triple-helical region 4 (COL4). The span at 31 to 43 (ERGPPGPPGPPGV) shows a compositional bias: pro residues. Low complexity predominate over residues 44–56 (PGSDGIDGDNGPP). Pro residues-rich tracts occupy residues 106–127 (LPGP…PGPV) and 144–157 (PDGP…PGKP). Proline 160 is subject to 4-hydroxyproline. The interval 164 to 180 (QGLEGSADFLCPTNCPP) is nonhelical region 4 (NC4). Serine 169 carries an O-linked (Xyl...) (glycosaminoglycan) serine glycan. Positions 181–519 (GMKGPPGLQG…PGRQGVEGRD (339 aa)) are triple-helical region 3 (COL3). Lysine 183 bears the 5-hydroxylysine mark. A glycan (O-linked (Gal...) hydroxylysine) is linked at lysine 183. Residues 343–352 (GTKGGPGDQG) are compositionally biased toward gly residues. Low complexity-rich tracts occupy residues 353–366 (EPGP…SGPP) and 393–413 (RGPV…EQGP). Positions 520 to 549 (ATDQHIVDVALKMLQEQLAEVAVSAKREAL) are nonhelical region 3 (NC3). The triple-helical region 2 (COL2) stretch occupies residues 550–632 (GAVGMMGPPG…PGLPGRPGQA (83 aa)). A disordered region spans residues 554 to 663 (MMGPPGPPGP…LPGPVGLPGF (110 aa)). The span at 557–566 (PPGPPGPPGY) shows a compositional bias: pro residues. The span at 599–611 (KRGEKGDPGEVGR) shows a compositional bias: basic and acidic residues. Positions 633–634 (IN) are nonhelical region 2 (NC2). The interval 635-664 (GKDGDRGSPGAPGEAGRPGLPGPVGLPGFC) is triple-helical region 1 (COL1). The tract at residues 665–689 (EPAACLGASAYASARLTEPGSIKGP) is nonhelical region 1 (NC1).

It belongs to the fibril-associated collagens with interrupted helices (FACIT) family. In terms of assembly, heterotrimer of an alpha 1(IX), an alpha 2(IX) and an alpha 3(IX) chain. The chains are linked to each other by interchain disulfide bonds. Trimers are also cross-linked via hydroxylysines. Covalently linked to the telopeptides of type II collagen by lysine-derived cross-links. In terms of processing, prolines at the third position of the tripeptide repeating unit (G-X-Y) are hydroxylated in some or all of the chains.

It is found in the secreted. The protein resides in the extracellular space. Its subcellular location is the extracellular matrix. In terms of biological role, structural component of hyaline cartilage and vitreous of the eye. This chain is Collagen alpha-2(IX) chain, found in Homo sapiens (Human).